A 960-amino-acid polypeptide reads, in one-letter code: Dynamin-like GTPase OPA1, mitochondrial (960 aa).

The transit peptide at methionine 1 to asparagine 87 directs the protein to the mitochondrion. The Mitochondrial matrix segment spans residues phenylalanine 88–arginine 96. The helical transmembrane segment at leucine 97 to tyrosine 113 threads the bilayer. Over threonine 114–aspartate 770 the chain is Mitochondrial intermembrane. The stretch at serine 210–glycine 254 forms a coiled coil. The LQQQIQ motif motif lies at glutamine 217 to leucine 222. Lysine 228 carries the post-translational modification N6-acetyllysine. The LQQQIQ motif signature appears at glutamate 234–glutamate 239. The Dynamin-type G domain occupies glutamine 285–glutamate 561. The tract at residues glycine 295–threonine 302 is G1 motif. GTP is bound by residues serine 298, glycine 300, lysine 301, threonine 302, serine 303, and glycine 317. Threonine 302 provides a ligand contact to Mg(2+). The interval methionine 321–arginine 324 is G2 motif. Mg(2+)-binding residues include threonine 323 and aspartate 398. Residues aspartate 398 to glycine 401 are G3 motif. Positions threonine 467 to aspartate 470 are G4 motif. GTP contacts are provided by lysine 468, aspartate 470, and threonine 503. Residues valine 501 to glycine 504 are G5 motif. Stalk region regions lie at residues aspartate 589–threonine 836 and cysteine 874–leucine 928. Residues serine 736–cysteine 856 form a paddle region region. An intramembrane segment occupies tryptophan 771–arginine 781. Topologically, residues threonine 782 to lysine 960 are mitochondrial intermembrane. Residues cysteine 856 and cysteine 874 are joined by a disulfide bond. Residues arginine 895–lysine 960 adopt a coiled-coil conformation.

Belongs to the TRAFAC class dynamin-like GTPase superfamily. Dynamin/Fzo/YdjA family. As to quaternary structure, oligomeric complex consisting of membrane-bound and soluble forms of OPA1. Interacts with RCC1L; RCC1L acts as a guanine nucleotide exchange factor (GEF) for OPA1 by exchanging bound GDP for free GTP. Interacts with CHCHD3 and IMMT; these interactions occur preferentially with soluble OPA1 forms. Interacts with PRELID1. In terms of processing, cleaved by OMA1 or YME1L downstream of the transmembrane region in response to different signals to generate soluble forms. Cleaved by OMA1 at position S1 following stress conditions, generating the short soluble form (Dynamin-like GTPase OPA1, short form; S-OPA1). AFG3L2 is involved in the regulation of OMA1-dependent processing of OPA1. PARL-dependent proteolytic processing releases an antiapoptotic soluble form not required for mitochondrial fusion. Post-translationally, cleavage at position S2 by YME1L is required to mediate oxidative phosphorylation (OXPHOS)-induced mitochondrial fusion. Cleavage occurs in the sequence motif Leu-Gln-Gln-Gln-Ile-Gln (LQQQIQ). In terms of tissue distribution, expressed in brain as well as retinal ganglion, starbust amacrine and horizontal cells of the retina. Absent from nerve fibers and photoreceptor cells of the retina.

It is found in the mitochondrion inner membrane. The protein localises to the mitochondrion intermembrane space. The catalysed reaction is GTP + H2O = GDP + phosphate + H(+). Its activity is regulated as follows. Activated by guanine nucleotide exchange factor RCC1L. Its function is as follows. Dynamin-related GTPase that is essential for normal mitochondrial morphology by mediating fusion of the mitochondrial inner membranes, regulating cristae morphology and maintaining respiratory chain function. Exists in two forms: the transmembrane, long form (Dynamin-like GTPase OPA1, long form; L-OPA1), which is tethered to the inner mitochondrial membrane, and the short soluble form (Dynamin-like GTPase OPA1, short form; S-OPA1), which results from proteolytic cleavage and localizes in the intermembrane space. Both forms (L-OPA1 and S-OPA1) cooperate to catalyze the fusion of the mitochondrial inner membrane. The equilibrium between L-OPA1 and S-OPA1 is essential: excess levels of S-OPA1, produced by cleavage by OMA1 following loss of mitochondrial membrane potential, lead to an impaired equilibrium between L-OPA1 and S-OPA1, inhibiting mitochondrial fusion. The balance between L-OPA1 and S-OPA1 also influences cristae shape and morphology. Involved in remodeling cristae and the release of cytochrome c during apoptosis. Proteolytic processing by PARL in response to intrinsic apoptotic signals may lead to disassembly of OPA1 oligomers and release of the caspase activator cytochrome C (CYCS) into the mitochondrial intermembrane space. Acts as a regulator of T-helper Th17 cells, which are characterized by cells with fused mitochondria with tight cristae, by mediating mitochondrial membrane remodeling: OPA1 is required for interleukin-17 (IL-17) production. Its role in mitochondrial morphology is required for mitochondrial genome maintenance. Constitutes the transmembrane long form (L-OPA1) that plays a central role in mitochondrial inner membrane fusion and cristae morphology. L-OPA1 and the soluble short form (S-OPA1) form higher-order helical assemblies that coordinate the fusion of mitochondrial inner membranes. Inner membrane-anchored L-OPA1 molecules initiate membrane remodeling by recruiting soluble S-OPA1 to rapidly polymerize into a flexible cylindrical scaffold encaging the mitochondrial inner membrane. Once at the membrane surface, the formation of S-OPA1 helices induce bilayer curvature. OPA1 dimerization through the paddle region, which inserts into cardiolipin-containing membrane, promotes GTP hydrolysis and the helical assembly of a flexible OPA1 lattice on the membrane, which drives membrane curvature and mitochondrial fusion. Plays a role in the maintenance and remodeling of mitochondrial cristae, some invaginations of the mitochondrial inner membrane that provide an increase in the surface area. Probably acts by forming helical filaments at the inside of inner membrane tubes with the shape and dimensions of crista junctions. The equilibrium between L-OPA1 and S-OPA1 influences cristae shape and morphology: increased L-OPA1 levels promote cristae stacking and elongated mitochondria, while increased S-OPA1 levels correlated with irregular cristae packing and round mitochondria shape. In terms of biological role, constitutes the soluble short form (S-OPA1) generated by cleavage by OMA1, which plays a central role in mitochondrial inner membrane fusion and cristae morphology. The transmembrane long form (L-OPA1) and the S-OPA1 form higher-order helical assemblies that coordinate the fusion of mitochondrial inner membranes. Inner membrane-anchored L-OPA1 molecules initiate membrane remodeling by recruiting soluble S-OPA1 to rapidly polymerize into a flexible cylindrical scaffold encaging the mitochondrial inner membrane. Once at the membrane surface, the formation of S-OPA1 helices induce bilayer curvature. OPA1 dimerization through the paddle region, which inserts into cardiolipin-containing membrane, promotes GTP hydrolysis and the helical assembly of a flexible OPA1 lattice on the membrane, which drives membrane curvature and mitochondrial fusion. Excess levels of S-OPA1 produced by cleavage by OMA1 following stress conditions that induce loss of mitochondrial membrane potential, lead to an impaired equilibrium between L-OPA1 and S-OPA1, thereby inhibiting mitochondrial fusion. Involved in mitochondrial safeguard in response to transient mitochondrial membrane depolarization by mediating flickering: cleavage by OMA1 leads to excess production of S-OPA1, preventing mitochondrial hyperfusion. Plays a role in the maintenance and remodeling of mitochondrial cristae, some invaginations of the mitochondrial inner membrane that provide an increase in the surface area. Probably acts by forming helical filaments at the inside of inner membrane tubes with the shape and dimensions of crista junctions. The equilibrium between L-OPA1 and S-OPA1 influences cristae shape and morphology: increased L-OPA1 levels promote cristae stacking and elongated mitochondria, while increased S-OPA1 levels correlated with irregular cristae packing and round mitochondria shape. Functionally, isoforms that contain the alternative exon 4b are required for mitochondrial genome maintenance, possibly by anchoring the mitochondrial nucleoids to the inner mitochondrial membrane. The sequence is that of Dynamin-like GTPase OPA1, mitochondrial from Rattus norvegicus (Rat).